The following is a 567-amino-acid chain: 2-isopropylmalate synthase (567 aa).

The region spanning 28–302 (PQWCSVDLRD…NPELDFSDIN (275 aa)) is the Pyruvate carboxyltransferase domain. Residues Asp-37, His-241, His-243, and Asn-277 each coordinate Mg(2+). Residues 435-567 (IRTPLQLNYH…DMDTQEEDIA (133 aa)) are regulatory domain.

The protein belongs to the alpha-IPM synthase/homocitrate synthase family. LeuA type 2 subfamily. Homodimer. Mg(2+) is required as a cofactor.

It is found in the cytoplasm. The catalysed reaction is 3-methyl-2-oxobutanoate + acetyl-CoA + H2O = (2S)-2-isopropylmalate + CoA + H(+). It participates in amino-acid biosynthesis; L-leucine biosynthesis; L-leucine from 3-methyl-2-oxobutanoate: step 1/4. Functionally, catalyzes the condensation of the acetyl group of acetyl-CoA with 3-methyl-2-oxobutanoate (2-ketoisovalerate) to form 3-carboxy-3-hydroxy-4-methylpentanoate (2-isopropylmalate). The chain is 2-isopropylmalate synthase from Acetoanaerobium sticklandii (strain ATCC 12662 / DSM 519 / JCM 1433 / CCUG 9281 / NCIMB 10654 / HF) (Clostridium sticklandii).